A 275-amino-acid polypeptide reads, in one-letter code: MSTCGRKALTLLSSVFAVCGLGLLGIAVSTDYWLYLEEGIILPQNQSTEVKMSLHSGLWRVCFLAGEERGRCFTIEYVMPMNSQMTSESTVNVLKMIRSATPFPLVSLFFMFIGFILSNIGHIRPHRTILAFVSGIFFILSGLSLVVGLVLYISSINDEMLNRTKDAETYFNYKYGWSFAFAAISFLLTESAGVMSVYLFMKRYTAEDMYRPHPGFYRPRLSNCSDYSGQFLHPDAWIRGRSPSDISSDASLQMNSNYPALLKCPDYDQMSSSPC.

4 helical membrane passes run 8 to 28, 103 to 123, 129 to 149, and 181 to 201; these read ALTLLSSVFAVCGLGLLGIAV, FPLVSLFFMFIGFILSNIGHI, ILAFVSGIFFILSGLSLVVGL, and FAAISFLLTESAGVMSVYLFM.

This sequence belongs to the PMP-22/EMP/MP20 family. CACNG subfamily. The L-type calcium channel is composed of five subunits: alpha-1, alpha-2/delta, beta and gamma. Acts as an auxiliary subunit for AMPA-selective glutamate receptors (AMPARs). Found in a complex with GRIA1, GRIA2, GRIA3, GRIA4, CNIH2, CNIH3, CACNG2, CACNG3, CACNG4, CACNG7 and CACNG8. Interacts with GRIA1, GRIA2, GRIA3 and GRIA4.

It localises to the membrane. The protein localises to the postsynaptic density membrane. In terms of biological role, regulates the gating properties of AMPA-selective glutamate receptors (AMPARs). Modulates their gating properties by accelerating their rates of activation, deactivation and desensitization. Displays subunit-specific AMPA receptor regulation. Shows specificity for GRIA1, GRIA4 and the long isoform of GRIA2. According to PubMed:18817736, shows only specificity for GRIA2 and specifically to the form of GRIA2 for which a single amino acid in the pore region has been edited from a glutamine to an arginine residue. Thought to stabilize the calcium channel in an inactivated (closed) state. This chain is Voltage-dependent calcium channel gamma-5 subunit (Cacng5), found in Rattus norvegicus (Rat).